The chain runs to 1064 residues: Rab GTPase-activating protein 1 (1064 aa).

Residues 1 to 101 (MDDKASVGKI…SNQLSASSTI (101 aa)) form a disordered region. Residues 7–22 (VGKISVSSDSVSTLNS) show a composition bias toward low complexity. Position 42 is a phosphoserine (S42). Residues 91-101 (LSNQLSASSTI) show a composition bias toward polar residues. Residues 137-293 (EDSVVFNKLT…IFTFSVSLEI (157 aa)) form the PID domain. S355 bears the Phosphoserine mark. The interval 478 to 520 (RERRKTTASPSVRLPQSGSQSSMIPSPPEDDEEEDNDEPLLSG) is disordered. The segment covering 484–501 (TASPSVRLPQSGSQSSMI) has biased composition (polar residues). Acidic residues predominate over residues 505-515 (PEDDEEEDNDE). The Rab-GAP TBC domain occupies 561-747 (GVPEALRGEV…HIIDLLLCEG (187 aa)). The stretch at 805 to 1038 (SQKKLKKFEK…HLGLALSEVQ (234 aa)) forms a coiled coil. T991 bears the Phosphothreonine mark.

As to quaternary structure, interacts with RAB6A and tubulin gamma.

The protein resides in the cytoplasm. It localises to the cytosol. Its subcellular location is the cytoskeleton. The protein localises to the microtubule organizing center. It is found in the centrosome. Functionally, may act as a GTPase-activating protein of RAB6A. May play a role in microtubule nucleation by centrosome. May participate in a RAB6A-mediated pathway involved in the metaphase-anaphase transition. This Mus musculus (Mouse) protein is Rab GTPase-activating protein 1.